The sequence spans 258 residues: Phosphate import ATP-binding protein PstB (258 aa).

The 242-residue stretch at 12–253 folds into the ABC transporter domain; the sequence is IQVHNLNFYY…PKMKQTEDYI (242 aa). 44–51 provides a ligand contact to ATP; that stretch reads GPSGCGKS.

This sequence belongs to the ABC transporter superfamily. Phosphate importer (TC 3.A.1.7) family. In terms of assembly, the complex is composed of two ATP-binding proteins (PstB), two transmembrane proteins (PstC and PstA) and a solute-binding protein (PstS).

Its subcellular location is the cell inner membrane. It catalyses the reaction phosphate(out) + ATP + H2O = ADP + 2 phosphate(in) + H(+). Part of the ABC transporter complex PstSACB involved in phosphate import. Responsible for energy coupling to the transport system. The sequence is that of Phosphate import ATP-binding protein PstB from Photorhabdus laumondii subsp. laumondii (strain DSM 15139 / CIP 105565 / TT01) (Photorhabdus luminescens subsp. laumondii).